Reading from the N-terminus, the 387-residue chain is MSSELTSKVDKEARKKAADTLRQVFVKLIEQINNSEPPTMEIPKRTLGNTIYDEKRKLLLLGEEKLKRSFFDLNESKRFMQTVLMASIIYDALINDEYPTIRDLYYRGKHSIILKDPRGKTYEENTWDEQKESDSVIMDIEVFTSLLREDMLILSKEKGKVVGDMRIRSGNDIIDLSKMGHGAYSIEPTPDLIDFVDINAEFVLVVEKDAVFQQLHRAGFWKQYKAILVTSAGQPDRATRRFVRRLNEELKLPVYILTDADPYGWYIYSVFRIGSISLSYESERLATPNAKFLGVSMTDIFGDSNKKPYLSEQERRNYIIKAKDADIKRATEIKNYQWFKTKAWQHEIEIFLNKKSKLEIEAMASKGLKFLAFQYIPEKIKSKDYIE.

A Topo IIA-type catalytic domain is found at Glu12 to Lys160. Tyr106 functions as the O-(5'-phospho-DNA)-tyrosine intermediate in the catalytic mechanism. The Mg(2+) site is built by Glu207 and Asp259.

The protein belongs to the TOP6A family. Homodimer. Heterotetramer of two Top6A and two Top6B chains. Mg(2+) is required as a cofactor.

The enzyme catalyses ATP-dependent breakage, passage and rejoining of double-stranded DNA.. In terms of biological role, relaxes both positive and negative superturns and exhibits a strong decatenase activity. This chain is Type 2 DNA topoisomerase 6 subunit A, found in Sulfurisphaera tokodaii (strain DSM 16993 / JCM 10545 / NBRC 100140 / 7) (Sulfolobus tokodaii).